Reading from the N-terminus, the 86-residue chain is Large ribosomal subunit protein bL27 (86 aa).

This sequence belongs to the bacterial ribosomal protein bL27 family.

The sequence is that of Large ribosomal subunit protein bL27 from Flavobacterium psychrophilum (strain ATCC 49511 / DSM 21280 / CIP 103535 / JIP02/86).